Consider the following 159-residue polypeptide: Transcription elongation factor GreA (159 aa).

Belongs to the GreA/GreB family.

In terms of biological role, necessary for efficient RNA polymerase transcription elongation past template-encoded arresting sites. The arresting sites in DNA have the property of trapping a certain fraction of elongating RNA polymerases that pass through, resulting in locked ternary complexes. Cleavage of the nascent transcript by cleavage factors such as GreA or GreB allows the resumption of elongation from the new 3'terminus. GreA releases sequences of 2 to 3 nucleotides. This Mycoplasmoides gallisepticum (strain R(low / passage 15 / clone 2)) (Mycoplasma gallisepticum) protein is Transcription elongation factor GreA.